The sequence spans 224 residues: Peroxiredoxin-6 (224 aa).

A Thioredoxin domain is found at 5 to 169 (LLLGDEAPNF…ILRVIISLQL (165 aa)). The required and sufficient for targeting to lysosomes and lamellar bodies stretch occupies residues 31–40 (DSWGILFSHP). T44 bears the Phosphothreonine mark. The active-site Cysteine sulfenic acid (-SOH) intermediate; for peroxidase activity is C47. At K63 the chain carries N6-acetyllysine. Y89 carries the phosphotyrosine modification. Catalysis depends on D140, which acts as the For phospholipase activity. The residue at position 177 (T177) is a Phosphothreonine; by MAPK. K209 is subject to N6-acetyllysine; alternate. K209 carries the N6-succinyllysine; alternate modification.

Belongs to the peroxiredoxin family. Prx6 subfamily. In terms of assembly, homodimer. Interacts with GSTP1; mediates PRDX6 glutathionylation and regeneration. Interacts with APEX1. Interacts with STH. May interact with FAM168B. May interact with HTR2A. Irreversibly inactivated by overoxidation of Cys-47 to sulfinic acid (Cys-SO(2)H) and sulfonic acid (Cys-SO(3)H) forms upon oxidative stress. Post-translationally, phosphorylation at Thr-177 by MAP kinases increases the phospholipase activity of the enzyme. The phosphorylated form exhibits a greater lysophosphatidylcholine acyltransferase activity compared to the non-phosphorylated form.

It is found in the cytoplasm. The protein resides in the lysosome. It catalyses the reaction a hydroperoxide + 2 glutathione = an alcohol + glutathione disulfide + H2O. The catalysed reaction is a 1,2-diacyl-sn-glycero-3-phosphocholine + H2O = a 1-acyl-sn-glycero-3-phosphocholine + a fatty acid + H(+). It carries out the reaction a 1-acyl-sn-glycero-3-phosphocholine + an acyl-CoA = a 1,2-diacyl-sn-glycero-3-phosphocholine + CoA. The enzyme catalyses 1-hexadecanoyl-sn-glycero-3-phosphocholine + hexadecanoyl-CoA = 1,2-dihexadecanoyl-sn-glycero-3-phosphocholine + CoA. It catalyses the reaction 1,2-dihexadecanoyl-sn-glycero-3-phosphocholine + H2O = 1-hexadecanoyl-sn-glycero-3-phosphocholine + hexadecanoate + H(+). Its function is as follows. Thiol-specific peroxidase that catalyzes the reduction of hydrogen peroxide and organic hydroperoxides to water and alcohols, respectively. Can reduce H(2)O(2) and short chain organic, fatty acid, and phospholipid hydroperoxides. Also has phospholipase activity, and can therefore either reduce the oxidized sn-2 fatty acyl group of phospholipids (peroxidase activity) or hydrolyze the sn-2 ester bond of phospholipids (phospholipase activity). These activities are dependent on binding to phospholipids at acidic pH and to oxidized phospholipds at cytosolic pH. Plays a role in cell protection against oxidative stress by detoxifying peroxides and in phospholipid homeostasis. Exhibits acyl-CoA-dependent lysophospholipid acyltransferase which mediates the conversion of lysophosphatidylcholine (1-acyl-sn-glycero-3-phosphocholine or LPC) into phosphatidylcholine (1,2-diacyl-sn-glycero-3-phosphocholine or PC). Shows a clear preference for LPC as the lysophospholipid and for palmitoyl CoA as the fatty acyl substrate. The chain is Peroxiredoxin-6 (PRDX6) from Sus scrofa (Pig).